Here is a 330-residue protein sequence, read N- to C-terminus: Polyprenol dehydrogenase (330 aa).

The NAD(+) site is built by Ile-55, Tyr-208, Lys-212, and Thr-245. The Proton acceptor role is filled by Tyr-208.

It belongs to the short-chain dehydrogenases/reductases (SDR) family. In terms of tissue distribution, widely expressed. Highly expressed in the pancreas.

Its subcellular location is the lipid droplet. The protein resides in the secreted. The enzyme catalyses a di-trans,poly-cis-polyprenol + NAD(+) = a di-trans,poly-cis-polyprenal + NADH + H(+). The catalysed reaction is a di-trans,poly-cis-polyprenol + NADP(+) = a di-trans,poly-cis-polyprenal + NADPH + H(+). It catalyses the reaction a di-trans,poly-cis-dolichol + NADP(+) = a di-trans,poly-cis-dolichal + NADPH + H(+). It carries out the reaction a di-trans,poly-cis-dolichol + NAD(+) = a di-trans,poly-cis-dolichal + NADH + H(+). It participates in protein modification; protein glycosylation. Functionally, oxidoreductase that plays a key role in early steps of protein N-linked glycosylation by mediating two non-consecutive steps in dolichol biosynthesis. Acts both as a NAD(+)-dependent dehydrogenase and as a NADPH-dependent reductase during the conversion of polyprenol into dolichol. First catalyzes the NAD(+)-dependent dehydrogenation of polyprenol into polyprenal; polyprenal is then reduced into dolichal by SRD5A3. It then catalyzes the NADPH-dependent reduction of dolichal into dolichol. May also acts as a positive regulator of starvation-induced autophagy. The sequence is that of Polyprenol dehydrogenase from Homo sapiens (Human).